A 482-amino-acid chain; its full sequence is Glutamyl-tRNA(Gln) amidotransferase subunit A (482 aa).

Residues K81 and S156 each act as charge relay system in the active site. Catalysis depends on S180, which acts as the Acyl-ester intermediate.

Belongs to the amidase family. GatA subfamily. In terms of assembly, heterotrimer of A, B and C subunits.

It carries out the reaction L-glutamyl-tRNA(Gln) + L-glutamine + ATP + H2O = L-glutaminyl-tRNA(Gln) + L-glutamate + ADP + phosphate + H(+). In terms of biological role, allows the formation of correctly charged Gln-tRNA(Gln) through the transamidation of misacylated Glu-tRNA(Gln) in organisms which lack glutaminyl-tRNA synthetase. The reaction takes place in the presence of glutamine and ATP through an activated gamma-phospho-Glu-tRNA(Gln). The polypeptide is Glutamyl-tRNA(Gln) amidotransferase subunit A (Brachyspira hyodysenteriae (strain ATCC 49526 / WA1)).